Reading from the N-terminus, the 135-residue chain is Galectin-1 (135 aa).

A2 carries the post-translational modification N-acetylalanine. The Galectin domain maps to 4-135; it reads GLVASNLNLK…DFKIKCVAFE (132 aa). 3 positions are modified to N6-acetyllysine: K13, K19, and K29. S30 is modified (phosphoserine). A beta-D-galactoside-binding positions include 45–49, H53, N62, and 69–72; these read HFNPR and WGTE. K108 is subject to N6-acetyllysine; alternate. The residue at position 108 (K108) is an N6-succinyllysine; alternate. K128 carries the N6-acetyllysine modification.

Homodimer. Binds LGALS3BP. Interacts with CD2, CD3, CD4, CD6, CD7, CD43, ALCAM and CD45. Interacts with laminin (via poly-N-acetyllactosamine). Interacts with SUSD2. Interacts with cargo receptor TMED10; the interaction mediates the translocation from the cytoplasm into the ERGIC (endoplasmic reticulum-Golgi intermediate compartment) and thereby secretion. Interacts with CD69.

Its subcellular location is the secreted. It localises to the extracellular space. The protein resides in the extracellular matrix. It is found in the cytoplasm. Lectin that binds beta-galactoside and a wide array of complex carbohydrates. Plays a role in regulating apoptosis, cell proliferation and cell differentiation. Inhibits CD45 protein phosphatase activity and therefore the dephosphorylation of Lyn kinase. Strong inducer of T-cell apoptosis. Plays a negative role in Th17 cell differentiation via activation of the receptor CD69. This is Galectin-1 (Lgals1) from Rattus norvegicus (Rat).